The primary structure comprises 573 residues: DNA ligase (573 aa).

E250 provides a ligand contact to ATP. Catalysis depends on K252, which acts as the N6-AMP-lysine intermediate. R257, R272, E301, F342, R432, and K438 together coordinate ATP.

This sequence belongs to the ATP-dependent DNA ligase family. The cofactor is Mg(2+).

The enzyme catalyses ATP + (deoxyribonucleotide)n-3'-hydroxyl + 5'-phospho-(deoxyribonucleotide)m = (deoxyribonucleotide)n+m + AMP + diphosphate.. Functionally, DNA ligase that seals nicks in double-stranded DNA during DNA replication, DNA recombination and DNA repair. The chain is DNA ligase from Methanococcus maripaludis (strain C5 / ATCC BAA-1333).